The primary structure comprises 334 residues: Glyceraldehyde-3-phosphate dehydrogenase (334 aa).

Residues 12 to 13 (TI) and G111 each bind NAD(+). 140 to 142 (SCN) lines the D-glyceraldehyde 3-phosphate pocket. C141 functions as the Nucleophile in the catalytic mechanism. Residue R167 participates in NAD(+) binding. Position 192 to 193 (192 to 193 (HG)) interacts with D-glyceraldehyde 3-phosphate. Residue Q298 participates in NAD(+) binding.

Belongs to the glyceraldehyde-3-phosphate dehydrogenase family. As to quaternary structure, homotetramer.

It localises to the cytoplasm. The enzyme catalyses D-glyceraldehyde 3-phosphate + phosphate + NADP(+) = (2R)-3-phospho-glyceroyl phosphate + NADPH + H(+). The catalysed reaction is D-glyceraldehyde 3-phosphate + phosphate + NAD(+) = (2R)-3-phospho-glyceroyl phosphate + NADH + H(+). It functions in the pathway carbohydrate degradation; glycolysis; pyruvate from D-glyceraldehyde 3-phosphate: step 1/5. This chain is Glyceraldehyde-3-phosphate dehydrogenase, found in Thermococcus kodakarensis (strain ATCC BAA-918 / JCM 12380 / KOD1) (Pyrococcus kodakaraensis (strain KOD1)).